A 282-amino-acid polypeptide reads, in one-letter code: Protoheme IX farnesyltransferase (282 aa).

The next 9 helical transmembrane spans lie at 13–33, 36–56, 74–96, 101–120, 129–149, 156–176, 207–227, 232–252, and 261–281; these read VAGM…GAAG, MVTS…FNQI, ASGR…PALI, AGGV…YNGV, AFSL…GWLA, SPEI…HFWL, LWYA…FIAE, IAVC…LASP, and VSML…SGII.

Belongs to the UbiA prenyltransferase family. Protoheme IX farnesyltransferase subfamily.

The protein localises to the cell inner membrane. It catalyses the reaction heme b + (2E,6E)-farnesyl diphosphate + H2O = Fe(II)-heme o + diphosphate. It functions in the pathway porphyrin-containing compound metabolism; heme O biosynthesis; heme O from protoheme: step 1/1. In terms of biological role, converts heme B (protoheme IX) to heme O by substitution of the vinyl group on carbon 2 of heme B porphyrin ring with a hydroxyethyl farnesyl side group. This chain is Protoheme IX farnesyltransferase, found in Oleidesulfovibrio alaskensis (strain ATCC BAA-1058 / DSM 17464 / G20) (Desulfovibrio alaskensis).